The chain runs to 524 residues: Serine/threonine-protein kinase PAK 2 (524 aa).

Residues 1–81 (MSDNGELEDK…PEISPPSDFE (81 aa)) are disordered. Residue serine 2 is modified to N-acetylserine. Phosphoserine occurs at positions 2, 20, 55, and 58. Threonine 60 bears the Phosphothreonine mark. Position 62 is an N6-acetyllysine (lysine 62). Residue serine 64 is modified to Phosphoserine. Residues 67–81 (KEKERPEISPPSDFE) show a composition bias toward basic and acidic residues. Residues 69–112 (KERPEISPPSDFEHTIHVGFDAVTGEFTGMPEQWARLLQTSNIT) form a GTPase-binding region. The autoregulatory region stretch occupies residues 69-137 (KERPEISPPS…KFYDSNTVKQ (69 aa)). The CRIB domain occupies 74-87 (ISPPSDFEHTIHVG). The residue at position 128 (lysine 128) is an N6-acetyllysine. At threonine 134 the chain carries Phosphothreonine. Tyrosine 139 is subject to Phosphotyrosine. Phosphoserine is present on serine 141. Threonine 143 is modified (phosphothreonine). Disordered stretches follow at residues 143 to 164 (TPPEKDGFPSGTPALNAKGTEA) and 169 to 188 (TEEEDDDEETAPPVIAPRPD). Position 152 is a phosphoserine (serine 152). A phosphothreonine mark is found at threonine 154 and threonine 169. The segment covering 169 to 178 (TEEEDDDEET) has biased composition (acidic residues). Position 197 is a phosphoserine (serine 197). Residue glycine 213 is the site of N-myristoyl glycine; in form PAK-2p34 attachment. Residues 245 to 251 (PKKKYTR) carry the Nuclear localization signal motif. In terms of domain architecture, Protein kinase spans 249 to 499 (YTRYEKIGQG…SAKELLQHPF (251 aa)). ATP contacts are provided by residues 255–263 (IGQGASGTV) and lysine 278. The active-site Proton acceptor is arginine 367. The residue at position 402 (threonine 402) is a Phosphothreonine; by autocatalysis.

Belongs to the protein kinase superfamily. STE Ser/Thr protein kinase family. STE20 subfamily. As to quaternary structure, interacts tightly with GTP-bound but not GDP-bound CDC42/p21 and RAC1. Interacts with SH3MD4. Interacts with SCRIB. Interacts with ARHGEF7 and GIT1. PAK-2p34 interacts with ARHGAP10. In terms of assembly, (Microbial infection) Interacts with and activated by HIV-1 Nef. Post-translationally, full-length PAK2 is autophosphorylated when activated by CDC42/p21. Following cleavage, both peptides, PAK-2p27 and PAK-2p34, become highly autophosphorylated, with PAK-2p27 being phosphorylated on serine and PAK-2p34 on threonine residues, respectively. Autophosphorylation of PAK-2p27 can occur in the absence of any effectors and is dependent on phosphorylation of Thr-402, because PAK-2p27 is acting as an exogenous substrate. In terms of processing, during apoptosis proteolytically cleaved by caspase-3 or caspase-3-like proteases to yield active PAK-2p34. Ubiquitinated, leading to its proteasomal degradation. Post-translationally, PAK-2p34 is myristoylated. Ubiquitously expressed. Higher levels seen in skeletal muscle, ovary, thymus and spleen.

The protein resides in the cytoplasm. It localises to the nucleus. Its subcellular location is the perinuclear region. The protein localises to the membrane. It catalyses the reaction L-seryl-[protein] + ATP = O-phospho-L-seryl-[protein] + ADP + H(+). The enzyme catalyses L-threonyl-[protein] + ATP = O-phospho-L-threonyl-[protein] + ADP + H(+). Activated by binding small G proteins. Binding of GTP-bound CDC42 or RAC1 to the autoregulatory region releases monomers from the autoinhibited dimer, enables phosphorylation of Thr-402 and allows the kinase domain to adopt an active structure. Following caspase cleavage, autophosphorylated PAK-2p34 is constitutively active. Serine/threonine protein kinase that plays a role in a variety of different signaling pathways including cytoskeleton regulation, cell motility, cell cycle progression, apoptosis or proliferation. Acts as a downstream effector of the small GTPases CDC42 and RAC1. Activation by the binding of active CDC42 and RAC1 results in a conformational change and a subsequent autophosphorylation on several serine and/or threonine residues. Full-length PAK2 stimulates cell survival and cell growth. Phosphorylates MAPK4 and MAPK6 and activates the downstream target MAPKAPK5, a regulator of F-actin polymerization and cell migration. Phosphorylates JUN and plays an important role in EGF-induced cell proliferation. Phosphorylates many other substrates including histone H4 to promote assembly of H3.3 and H4 into nucleosomes, BAD, ribosomal protein S6, or MBP. Phosphorylates CASP7, thereby preventing its activity. Additionally, associates with ARHGEF7 and GIT1 to perform kinase-independent functions such as spindle orientation control during mitosis. On the other hand, apoptotic stimuli such as DNA damage lead to caspase-mediated cleavage of PAK2, generating PAK-2p34, an active p34 fragment that translocates to the nucleus and promotes cellular apoptosis involving the JNK signaling pathway. Caspase-activated PAK2 phosphorylates MKNK1 and reduces cellular translation. In Homo sapiens (Human), this protein is Serine/threonine-protein kinase PAK 2 (PAK2).